The sequence spans 686 residues: MSAKQDGSTAESRKAPHSYRERVNSTVELAALVYRPLTASGALLSILRGKLYRRRSVRNVLDVVAVRSISGGQGHSAESKVRVEYLTPAEGNANGNSISNISAAPCADIRGSSDTAATSSSPSTPAQPTLLEGRCKMCLLDPTVLKATELCPDPASAAQHCTPVFLLGAAVVGSHVTRQLEAAVQAGQLSRKAADLLQQLHERLAGGPSSVSLTEDTDGSEQPQGLPRAAAAPPPPSNKRRASYTGAVEVTFTPRAVELNYQAYTMSELLSMVLPLREHADLVALSGFEQVGHIAHVNLSAAHLPYADIIGQVILDCNETVSVVVNKVDAISSVFREFKMDIIGLRRRTDSVDGNVVAGADLDDAGEAGGSLTAAERQAIALEALSPTYSLAEARVHRLLTATVRQHGCSFRVPYNRVYWNSRLSFEHTRLVDRMRPGDVLFDVMAGVGPFAVPAAKKGVQVFANDLNPVAAQYMKVNAELNHLPANALHVFNMDGRDFLNSVLFTSVTRAADASLPGHLCTGRRHVTMNLPAIAVEFLDVFQPLSSTCAPASEQRCNASAAAVVNERWNHLPAHVDPNAIDRRTLFHVYCFSAAEDLITDAVRQVEVNLGYTLPPENIEETLMVRDVAPTKRMMCVSFTLPPAFWKNLLASRPGQGGEPGGAHAETASTLVEVEQAAKKARPDKM.

The segment at 206–244 (GGPSSVSLTEDTDGSEQPQGLPRAAAAPPPPSNKRRASY) is disordered. S-adenosyl-L-methionine contacts are provided by residues histidine 428, 466–467 (DL), 495–496 (DG), and asparagine 530.

This sequence belongs to the class I-like SAM-binding methyltransferase superfamily. TRM5/TYW2 family. Monomer.

It is found in the mitochondrion matrix. Its subcellular location is the nucleus. The protein localises to the cytoplasm. It catalyses the reaction guanosine(37) in tRNA + S-adenosyl-L-methionine = N(1)-methylguanosine(37) in tRNA + S-adenosyl-L-homocysteine + H(+). In terms of biological role, specifically methylates the N1 position of guanosine-37 in various cytoplasmic and mitochondrial tRNAs. Methylation is not dependent on the nature of the nucleoside 5' of the target nucleoside. This is the first step in the biosynthesis of wybutosine (yW), a modified base adjacent to the anticodon of tRNAs and required for accurate decoding. This chain is tRNA (guanine(37)-N(1))-methyltransferase, found in Leishmania major.